We begin with the raw amino-acid sequence, 427 residues long: Glutamate-1-semialdehyde 2,1-aminomutase (427 aa).

K265 bears the N6-(pyridoxal phosphate)lysine mark.

It belongs to the class-III pyridoxal-phosphate-dependent aminotransferase family. HemL subfamily. As to quaternary structure, homodimer. Pyridoxal 5'-phosphate is required as a cofactor.

The protein localises to the cytoplasm. It catalyses the reaction (S)-4-amino-5-oxopentanoate = 5-aminolevulinate. The protein operates within porphyrin-containing compound metabolism; protoporphyrin-IX biosynthesis; 5-aminolevulinate from L-glutamyl-tRNA(Glu): step 2/2. The chain is Glutamate-1-semialdehyde 2,1-aminomutase from Bordetella pertussis (strain Tohama I / ATCC BAA-589 / NCTC 13251).